The sequence spans 412 residues: Branched-chain alpha-ketoacid dehydrogenase kinase (412 aa).

The transit peptide at 1-30 (MILASVLRSGPGGGLPLRPLLGPALALRAR) directs the protein to the mitochondrion. Ser-31 carries the phosphoserine modification. The residue at position 52 (Ser-52) is a Phosphoserine; by autocatalysis. Positions 159 to 404 (LDDHKDVVTL…DVYLRLRHID (246 aa)) constitute a Histidine kinase domain. N6-acetyllysine is present on residues Lys-192 and Lys-233. Positions 279 and 315 each coordinate ATP. Position 279 (Asn-279) interacts with Mg(2+). 3 residues coordinate K(+): Val-328, Asp-330, and Phe-333. Positions 334 and 335 each coordinate ATP. Phosphoserine occurs at positions 356 and 360. Residues His-364, Gly-367, and Leu-370 each coordinate ATP. A K(+)-binding site is contributed by Gly-367.

It belongs to the PDK/BCKDK protein kinase family. As to quaternary structure, homodimer. Homotetramer. Dimerizes through interaction of two opposing nucleotide-binding domains. Interacts with E2 component of the branched-chain alpha-ketoacid dehydrogenase (BCKDH) complex. Competes with BCKDK for binding to the E2 component; this interaction is modulated by branched-chain alpha-keto acids. At steady state, BCKDH holoenzyme contains BCKDK and BCKDHA is phosphorylated. In response to high levels of branched-chain alpha-keto acids, the inhibitory BCKDK is replaced by activating PPM1K leading to BCKDHA dephosphorylation and BCAA degradation. Autophosphorylated. In terms of tissue distribution, ubiquitous.

It is found in the mitochondrion matrix. It catalyses the reaction L-seryl-[3-methyl-2-oxobutanoate dehydrogenase] + ATP = O-phospho-L-seryl-[3-methyl-2-oxobutanoate dehydrogenase] + ADP + H(+). The enzyme catalyses L-seryl-[protein] + ATP = O-phospho-L-seryl-[protein] + ADP + H(+). Its pathway is protein modification. Allosterically inhibited by certain thiazoles and thiophenes: thiazoles increase interaction with DBT/BCKDH-E2, whereas thiophenes reduce this interaction. Inhibited by 3,6- dichlorobenzo[b]thiophene-2-carboxylic acid (BT2). The ATP binding is mediated by both potassium and magnesium ions. In terms of biological role, serine/threonine-protein kinase component of macronutrients metabolism. Forms a functional kinase and phosphatase pair with PPM1K, serving as a metabolic regulatory node that coordinates branched-chain amino acids (BCAAs) with glucose and lipid metabolism via two distinct phosphoprotein targets: mitochondrial BCKDHA subunit of the branched-chain alpha-ketoacid dehydrogenase (BCKDH) complex and cytosolic ACLY, a lipogenic enzyme of Krebs cycle. Phosphorylates and inactivates mitochondrial BCKDH complex a multisubunit complex consisting of three multimeric components each involved in different steps of BCAA catabolism: E1 composed of BCKDHA and BCKDHB, E2 core composed of DBT monomers, and E3 composed of DLD monomers. Associates with the E2 component of BCKDH complex and phosphorylates BCKDHA on Ser-337, leading to conformational changes that interrupt substrate channeling between E1 and E2 and inactivates the BCKDH complex. Phosphorylates ACLY on Ser-455 in response to changes in cellular carbohydrate abundance such as occurs during fasting to feeding metabolic transition. Refeeding stimulates MLXIPL/ChREBP transcription factor, leading to increased BCKDK to PPM1K expression ratio, phosphorylation and activation of ACLY that ultimately results in the generation of malonyl-CoA and oxaloacetate immediate substrates of de novo lipogenesis and glucogenesis, respectively. Recognizes phosphosites having SxxE/D canonical motif. The polypeptide is Branched-chain alpha-ketoacid dehydrogenase kinase (Homo sapiens (Human)).